The sequence spans 250 residues: NAD(P)H-quinone oxidoreductase subunit K, chloroplastic (250 aa).

[4Fe-4S] cluster is bound by residues Cys61, Cys62, Cys126, and Cys157.

Belongs to the complex I 20 kDa subunit family. As to quaternary structure, NDH is composed of at least 16 different subunits, 5 of which are encoded in the nucleus. The cofactor is [4Fe-4S] cluster.

It localises to the plastid. The protein localises to the chloroplast thylakoid membrane. The enzyme catalyses a plastoquinone + NADH + (n+1) H(+)(in) = a plastoquinol + NAD(+) + n H(+)(out). It carries out the reaction a plastoquinone + NADPH + (n+1) H(+)(in) = a plastoquinol + NADP(+) + n H(+)(out). NDH shuttles electrons from NAD(P)H:plastoquinone, via FMN and iron-sulfur (Fe-S) centers, to quinones in the photosynthetic chain and possibly in a chloroplast respiratory chain. The immediate electron acceptor for the enzyme in this species is believed to be plastoquinone. Couples the redox reaction to proton translocation, and thus conserves the redox energy in a proton gradient. The chain is NAD(P)H-quinone oxidoreductase subunit K, chloroplastic from Angiopteris evecta (Mule's foot fern).